Here is a 244-residue protein sequence, read N- to C-terminus: Leucyl/phenylalanyl-tRNA--protein transferase (244 aa).

Belongs to the L/F-transferase family.

The protein resides in the cytoplasm. The catalysed reaction is N-terminal L-lysyl-[protein] + L-leucyl-tRNA(Leu) = N-terminal L-leucyl-L-lysyl-[protein] + tRNA(Leu) + H(+). It catalyses the reaction N-terminal L-arginyl-[protein] + L-leucyl-tRNA(Leu) = N-terminal L-leucyl-L-arginyl-[protein] + tRNA(Leu) + H(+). The enzyme catalyses L-phenylalanyl-tRNA(Phe) + an N-terminal L-alpha-aminoacyl-[protein] = an N-terminal L-phenylalanyl-L-alpha-aminoacyl-[protein] + tRNA(Phe). Functions in the N-end rule pathway of protein degradation where it conjugates Leu, Phe and, less efficiently, Met from aminoacyl-tRNAs to the N-termini of proteins containing an N-terminal arginine or lysine. The chain is Leucyl/phenylalanyl-tRNA--protein transferase from Thermodesulfovibrio yellowstonii (strain ATCC 51303 / DSM 11347 / YP87).